The primary structure comprises 293 residues: Protease HtpX (293 aa).

Helical transmembrane passes span 2 to 22 and 38 to 58; these read FRILLFLATNIAVVLVASVTL and LTSLLIFCAVFGMSGAMISLF. His145 is a binding site for Zn(2+). Glu146 is a catalytic residue. His149 provides a ligand contact to Zn(2+). 2 consecutive transmembrane segments (helical) span residues 156-176 and 193-213; these read VTLALIQGVINTFVMFFARII and IGFFITTIFAEIVLGILASII. Residue Glu222 participates in Zn(2+) binding.

The protein belongs to the peptidase M48B family. The cofactor is Zn(2+).

It localises to the cell inner membrane. The sequence is that of Protease HtpX from Hahella chejuensis (strain KCTC 2396).